The sequence spans 37 residues: Large ribosomal subunit protein bL36c (37 aa).

This sequence belongs to the bacterial ribosomal protein bL36 family.

The protein localises to the plastid. Its subcellular location is the chloroplast. This chain is Large ribosomal subunit protein bL36c, found in Phaseolus angularis (Azuki bean).